Here is a 205-residue protein sequence, read N- to C-terminus: MLEVSNLTAIRDERVLFENLQFEIKPGELVQIEGRNGTGKTTLLRIITGLGDREEGMIKWKGEEVEKSRDVFHQDLLFLGHQTGVKRELTAFENLRFYQSIQNNSTSDEEIFTALTQVGLAGREDVPVAQLSAGQQRRVALARLWLSKQILWILDEPLTAIDKQGVKVLEALFAQHADNGGIVMLTTHQDMFADSPKLRKIKLGD.

The region spanning 2 to 204 is the ABC transporter domain; that stretch reads LEVSNLTAIR…SPKLRKIKLG (203 aa). ATP is bound at residue 34–41; the sequence is GRNGTGKT.

Belongs to the ABC transporter superfamily. CcmA exporter (TC 3.A.1.107) family. In terms of assembly, the complex is composed of two ATP-binding proteins (CcmA) and two transmembrane proteins (CcmB).

The protein resides in the cell inner membrane. It carries out the reaction heme b(in) + ATP + H2O = heme b(out) + ADP + phosphate + H(+). Functionally, part of the ABC transporter complex CcmAB involved in the biogenesis of c-type cytochromes; once thought to export heme, this seems not to be the case, but its exact role is uncertain. Responsible for energy coupling to the transport system. This chain is Cytochrome c biogenesis ATP-binding export protein CcmA, found in Vibrio parahaemolyticus serotype O3:K6 (strain RIMD 2210633).